The primary structure comprises 620 residues: Chaperone protein HscA homolog (620 aa).

Belongs to the heat shock protein 70 family.

Functionally, chaperone involved in the maturation of iron-sulfur cluster-containing proteins. Has a low intrinsic ATPase activity which is markedly stimulated by HscB. The protein is Chaperone protein HscA homolog of Shewanella sp. (strain MR-7).